A 576-amino-acid chain; its full sequence is Septation ring formation regulator EzrA (576 aa).

The Extracellular segment spans residues 1–7 (MSSTVII). The helical transmembrane segment at 8-26 (LIVVLLVILVAFYAFAILM) threads the bilayer. At 27-576 (RKKTEDRILA…FKNKPTPDYL (550 aa)) the chain is on the cytoplasmic side. Coiled coils occupy residues 105–134 (RARESVADSEAQIEMMEGDVEGIRQGVAQL), 254–305 (ENVN…FERE), and 356–402 (GYQE…IEKN).

The protein belongs to the EzrA family.

Its subcellular location is the cell membrane. In terms of biological role, negative regulator of FtsZ ring formation; modulates the frequency and position of FtsZ ring formation. Inhibits FtsZ ring formation at polar sites. Interacts either with FtsZ or with one of its binding partners to promote depolymerization. The sequence is that of Septation ring formation regulator EzrA from Lactococcus lactis subsp. cremoris (strain MG1363).